A 197-amino-acid chain; its full sequence is Peptidyl-tRNA hydrolase (197 aa).

Y23 is a binding site for tRNA. The active-site Proton acceptor is the H28. TRNA-binding residues include F73, N75, and N121.

Belongs to the PTH family. Monomer.

The protein resides in the cytoplasm. It catalyses the reaction an N-acyl-L-alpha-aminoacyl-tRNA + H2O = an N-acyl-L-amino acid + a tRNA + H(+). In terms of biological role, hydrolyzes ribosome-free peptidyl-tRNAs (with 1 or more amino acids incorporated), which drop off the ribosome during protein synthesis, or as a result of ribosome stalling. Functionally, catalyzes the release of premature peptidyl moieties from peptidyl-tRNA molecules trapped in stalled 50S ribosomal subunits, and thus maintains levels of free tRNAs and 50S ribosomes. The protein is Peptidyl-tRNA hydrolase of Frankia alni (strain DSM 45986 / CECT 9034 / ACN14a).